The sequence spans 184 residues: Ribosome-recycling factor (184 aa).

This sequence belongs to the RRF family.

The protein resides in the cytoplasm. Its function is as follows. Responsible for the release of ribosomes from messenger RNA at the termination of protein biosynthesis. May increase the efficiency of translation by recycling ribosomes from one round of translation to another. The sequence is that of Ribosome-recycling factor from Oleidesulfovibrio alaskensis (strain ATCC BAA-1058 / DSM 17464 / G20) (Desulfovibrio alaskensis).